The sequence spans 319 residues: ATP-dependent 6-phosphofructokinase (319 aa).

Gly-11 contributes to the ATP binding site. 21-25 (RAVVR) serves as a coordination point for ADP. ATP-binding positions include 72-73 (RC) and 102-105 (GDGS). Asp-103 contributes to the Mg(2+) binding site. 125–127 (TID) contributes to the substrate binding site. Asp-127 functions as the Proton acceptor in the catalytic mechanism. An ADP-binding site is contributed by Arg-154. Residues Arg-162 and 169-171 (MGR) contribute to the substrate site. ADP contacts are provided by residues 185–187 (GAE), Arg-211, and 213–215 (KKH). Substrate contacts are provided by residues Glu-222, Arg-243, and 249–252 (HIQR).

Belongs to the phosphofructokinase type A (PFKA) family. ATP-dependent PFK group I subfamily. Prokaryotic clade 'B1' sub-subfamily. Homotetramer. Requires Mg(2+) as cofactor.

The protein localises to the cytoplasm. It carries out the reaction beta-D-fructose 6-phosphate + ATP = beta-D-fructose 1,6-bisphosphate + ADP + H(+). The protein operates within carbohydrate degradation; glycolysis; D-glyceraldehyde 3-phosphate and glycerone phosphate from D-glucose: step 3/4. Allosterically activated by ADP and other diphosphonucleosides, and allosterically inhibited by phosphoenolpyruvate. Functionally, catalyzes the phosphorylation of D-fructose 6-phosphate to fructose 1,6-bisphosphate by ATP, the first committing step of glycolysis. This is ATP-dependent 6-phosphofructokinase from Bacillus velezensis (strain DSM 23117 / BGSC 10A6 / LMG 26770 / FZB42) (Bacillus amyloliquefaciens subsp. plantarum).